The primary structure comprises 350 residues: Putative ankyrin repeat protein RBE_0589 (350 aa).

3 ANK repeats span residues 81-110, 114-151, and 153-182; these read DGFT…NPNI, DIVT…EPTD, and SGWT…NLDI.

In Rickettsia bellii (strain RML369-C), this protein is Putative ankyrin repeat protein RBE_0589.